A 409-amino-acid polypeptide reads, in one-letter code: Elongation factor Tu, chloroplastic (409 aa).

The tr-type G domain occupies 10 to 214 (KPHVNIGTIG…TVDAYIPTPE (205 aa)). A G1 region spans residues 19–26 (GHVDHGKT). Position 19 to 26 (19 to 26 (GHVDHGKT)) interacts with GTP. T26 contacts Mg(2+). The interval 60-64 (GITIN) is G2. The tract at residues 81–84 (DCPG) is G3. GTP contacts are provided by residues 81–85 (DCPGH) and 136–139 (NKED). Residues 136-139 (NKED) are G4. The segment at 174 to 176 (SAL) is G5.

The protein belongs to the TRAFAC class translation factor GTPase superfamily. Classic translation factor GTPase family. EF-Tu/EF-1A subfamily.

Its subcellular location is the plastid. It is found in the chloroplast. The catalysed reaction is GTP + H2O = GDP + phosphate + H(+). In terms of biological role, GTP hydrolase that promotes the GTP-dependent binding of aminoacyl-tRNA to the A-site of ribosomes during protein biosynthesis. The chain is Elongation factor Tu, chloroplastic (tufA) from Pleurastrum terricola (Filamentous green alga).